A 797-amino-acid polypeptide reads, in one-letter code: Plakophilin-3 (797 aa).

Positions 58–81 (GQQSRHNGSAELDGSAESARGMPR) are disordered. Residue R81 is modified to Omega-N-methylarginine. Phosphoserine is present on residues S123, S180, and S183. The residue at position 195 (Y195) is a Phosphotyrosine. Positions 219 to 228 (ASSGSSRAGG) are enriched in low complexity. The interval 219 to 241 (ASSGSSRAGGLDWPEATEGPPSR) is disordered. S240 carries the phosphoserine modification. T250 is modified (phosphothreonine). The segment at 253–274 (RFQSSHRSRGGTGSVSGAGLEP) is disordered. R261 is modified (omega-N-methylarginine). The tract at residues 283 to 288 (SLSLSL) is required for interaction with SFN. S285, S313, S314, and S331 each carry phosphoserine. The interval 294-724 (LPDVRGLDSY…AEVLVNIIAV (431 aa)) is required for interaction with GSK3B. ARM repeat units follow at residues 305–348 (GHRT…HRCY), 351–390 (AAAKKQARSLQAVPRLVKLFNHANQEVQRHATGAMRNLIY), 393–432 (VDNKLALVEENGIFELLRTLREQDDELRKNVTGILWNLSS), 449–487 (TDLVLSPLSGAGGPPLIQQNASEAEIFYNATGFLRNLSS), 491–536 (ATRQ…NLSY), 596–637 (PKGL…NITA), 645–684 (VLSRLALEQERILNPLLDRVRTADHNQLRSLTGLIRNLSR), and 689–730 (KDEM…NLVV). Residues 516–797 (VGKCEDKSVE…GYRKEDFLGP (282 aa)) are required for binding to PKP2 mRNA.

It belongs to the beta-catenin family. In terms of assembly, found in a complex composed of CDH1, RAP1A and PKP3; PKP3 acts as a scaffold protein within the complex, the complex is required for CDH1 localization to mature desmosome cell junctions. Interacts with FXR1; the interaction facilitates the binding of PKP3 to PKP2 mRNA. Interacts (via ARM repeats) with GSK3B; the interaction may be involved in PKP3 protein degradation. Interacts with hyperphosphorylated and hypophosphorylated RB1; the interaction inhibits RB1 interaction with and repression of the transcription factor E2F1, potentially via sequestering RB1 to the cytoplasm. Interacts with CDKN1A; the interaction sequesters CDKN1A to the cytoplasm thereby repressing its role as an inhibitor of CDK4- and CDK6-driven RB1 phosphorylation. Interacts (via N-terminus) with SFN; the interaction maintains the cytoplasmic pool of PKP3, facilitates PKP3 exchange at desmosomes and restricts PKP3 localization to existing desmosome cell junctions. Interacts (via N-terminus) with JUP; the interaction is required for PKP3 localization to desmosome cell-cell junctions. Phosphorylated at Ser-285 when localized to the cytoplasm, PKP3 at desmosome cell junctions is not phosphorylated. Phosphorylation at Try-195 by SRC is induced by reactive oxygen species and potentially acts as a release mechanism from desmosome cell-cell junctions. In terms of tissue distribution, expressed in all layers of the epidermis, but is most abundant in the basal layer (at protein level). Expressed in keratinocytes of the epidermis at birth (at protein level). Expressed in the anagen non-keratinized inner root sheath cuticle and hair cuticle (at protein level). Also expressed in the matrix, precursors of the inner root sheath and hair shaft lineages (at protein level). Expressed at apical membranes in the outer hair root sheath and basal layer keratinocytes (at protein level). Expressed in intestinal epithelial cells and lamina propria of the ileum (at protein level). Expressed in keratinocytes (at protein level).

It is found in the nucleus. It localises to the cell junction. Its subcellular location is the desmosome. The protein localises to the cytoplasm. The protein resides in the cell membrane. It is found in the adherens junction. In terms of biological role, a component of desmosome cell-cell junctions which are required for positive regulation of cellular adhesion. Required for the localization of DSG2, DSP and PKP2 to mature desmosome junctions. May also play a role in the maintenance of DSG3 protein abundance in keratinocytes. Required for the formation of DSP-containing desmosome precursors in the cytoplasm during desmosome assembly. Also regulates the accumulation of CDH1 to mature desmosome junctions, via cAMP-dependent signaling and its interaction with activated RAP1A. Positively regulates the stabilization of PKP2 mRNA and therefore protein abundance, via its interaction with FXR1, may also regulate the protein abundance of DSP via the same mechanism. May also regulate the protein abundance of the desmosome component PKP1. Required for the organization of desmosome junctions at intercellular borders between basal keratinocytes of the epidermis, as a result plays a role in maintenance of the dermal barrier and regulation of the dermal inflammatory response. Required during epidermal keratinocyte differentiation for cell adherence at tricellular cell-cell contacts, via regulation of the timely formation of adherens junctions and desmosomes in a calcium-dependent manner, and may also play a role in the organization of the intracellular actin fiber belt. Acts as a negative regulator of the inflammatory response in hematopoietic cells of the skin and intestine, via modulation of proinflammatory cytokine production. Important for epithelial barrier maintenance in the intestine to reduce intestinal permeability, thereby plays a role in protection from intestinal-derived endotoxemia. Required for the development of hair follicles, via a role in the regulation of inner root sheaf length, correct alignment and anterior-posterior polarity of hair follicles. Promotes proliferation and cell-cycle G1/S phase transition of keratinocytes. Promotes E2F1-driven transcription of G1/S phase promoting genes by acting to release E2F1 from its inhibitory interaction with RB1, via sequestering RB1 and CDKN1A to the cytoplasm and thereby increasing CDK4- and CDK6-driven phosphorylation of RB1. May act as a scaffold protein to facilitate MAPK phosphorylation of RPS6KA protein family members and subsequently promote downstream EGFR signaling. May play a role in the positive regulation of transcription of Wnt-mediated TCF-responsive target genes. This Mus musculus (Mouse) protein is Plakophilin-3 (Pkp3).